The sequence spans 175 residues: Large ribosomal subunit protein uL10 (175 aa).

Belongs to the universal ribosomal protein uL10 family. Part of the ribosomal stalk of the 50S ribosomal subunit. The N-terminus interacts with L11 and the large rRNA to form the base of the stalk. The C-terminus forms an elongated spine to which L12 dimers bind in a sequential fashion forming a multimeric L10(L12)X complex.

Its function is as follows. Forms part of the ribosomal stalk, playing a central role in the interaction of the ribosome with GTP-bound translation factors. The protein is Large ribosomal subunit protein uL10 of Prochlorococcus marinus (strain AS9601).